The following is a 518-amino-acid chain: Major facilitator superfamily multidrug transporter mfsC (518 aa).

A run of 7 helical transmembrane segments spans residues 27–47, 65–85, 88–108, 123–143, 152–172, 183–203, and 212–232; these read VLLTTTVVNFLDLFQLSSVLF, WVLIVYNITFAAFLLIAGQLG, FGLEKIFIAGTATLTISNVIN, ISGVGAGLTAPNGLAILSNTF, ALAIYTACGPLGSTIGTVVGS, IFWLCLILTGLSTILACLFLP, and PIDIPGTVVFTAGVALLVYGL. Asn-233 carries an N-linked (GlcNAc...) asparagine glycan. Helical transmembrane passes span 242 to 262, 281 to 301, 315 to 335, 347 to 367, 380 to 400, 409 to 429, and 455 to 475; these read SAAMLTGIILGVCLLFVFLWV, FLVMLVAIFAFGGSFSTWFFI, ILTAVYFLPAAFAAIASGVFA, ILVAGLAITAAGAVAWAFAGP, TAIIFVIGSPVALVPTQSILL, AVAGALFNTAYQVGASVILAG, and AFWLIAGVLGAAALTVMVCYW.

The protein belongs to the major facilitator superfamily. EmrB family.

The protein localises to the membrane. In terms of biological role, major facilitator superfamily transporter that may be involved in A.fumigatus adaptation to azoles such as vorizonazole. This Aspergillus fumigatus (strain ATCC MYA-4609 / CBS 101355 / FGSC A1100 / Af293) (Neosartorya fumigata) protein is Major facilitator superfamily multidrug transporter mfsC.